The sequence spans 517 residues: Xaa-Pro dipeptidase (517 aa).

Aspartate 244, aspartate 255, histidine 336, glutamate 381, and glutamate 420 together coordinate Mn(2+).

This sequence belongs to the peptidase M24B family. Bacterial-type prolidase subfamily. Monomer. Mn(2+) is required as a cofactor.

The enzyme catalyses Xaa-L-Pro dipeptide + H2O = an L-alpha-amino acid + L-proline. It carries out the reaction diisopropyl fluorophosphate + H2O = diisopropyl phosphate + fluoride + 2 H(+). It catalyses the reaction An aryl dialkyl phosphate + H2O = dialkyl phosphate + an aryl alcohol.. Functionally, splits dipeptides with a prolyl or hydroxyprolyl residue in the C-terminal position and a nonpolar amino acid at the N-terminal position. Also catalyzes the hydrolysis of toxic organophosphorus cholinesterase-inhibiting compounds including insecticide paraoxon and nerve gases such as diisopropylfluorophosphate (DFP), O-isopropyl methylphosphonofluoridate (sarin), O-pinacolyl methylphosphonofluoridate (soman), and O-cyclohexyl methylphosphonofluoridate. The polypeptide is Xaa-Pro dipeptidase (pepQ) (Alteromonas sp).